A 439-amino-acid chain; its full sequence is Paraneoplastic antigen-like protein 8A (439 aa).

Positions 208 to 439 are disordered; the sequence is SALKAETPNN…RRATNESRKV (232 aa). The span at 231-249 shows a compositional bias: basic residues; the sequence is LVRRAGAKSRSRRKKQKKN. Composition is skewed to basic and acidic residues over residues 314–326, 395–404, and 423–439; these read GPREPPQDARAEA, SRREASDQKA, and AKPEGSPRRATNESRKV.

The protein belongs to the PNMA family.

The protein is Paraneoplastic antigen-like protein 8A of Homo sapiens (Human).